A 315-amino-acid chain; its full sequence is MTHQDLSITAKLINGGVAGLVGVTCVFPIDLAKTRLQNQHGKAMYKGMIDCLMKTARAEGFFGMYRGAAVNLTLVTPEKAIKLAANDFFRRLLMEDGMQRNLKMEMLAGCGAGMCQVVVTCPMEMLKIQLQDAGRLAVHHQGSASAPSTSRSYTTGSASTHRRPSATLIAWELLRTQGLAGLYRGLGATLLRDIPFSIIYFPLFANLNNLGFNELAGKASFAHSFVSGCVAGSIAAVAVTPLDVLKTRIQTLKKGLGEDMYSGITDCARKLWIQEGPSAFMKGAGCRALVIAPLFGIAQGVYFIGIGERILKCFD.

Solcar repeat units follow at residues 6 to 92 (LSIT…FRRL), 100 to 210 (RNLK…LNNL), and 219 to 308 (ASFA…GIGE). The next 3 membrane-spanning stretches (helical) occupy residues 12-32 (LING…IDLA), 61-81 (FFGM…EKAI), and 106-126 (MLAG…MEML). The tract at residues 141 to 160 (QGSASAPSTSRSYTTGSAST) is disordered. Residues 142–159 (GSASAPSTSRSYTTGSAS) are compositionally biased toward polar residues. Ser-145 carries the phosphoserine modification. The next 3 helical transmembrane spans lie at 185–205 (GLGA…PLFA), 225–245 (FVSG…LDVL), and 288–308 (ALVI…GIGE).

This sequence belongs to the mitochondrial carrier (TC 2.A.29) family. In terms of tissue distribution, expressed in brain, to a lesser extent in testis, and poorly in all the other tissues.

It is found in the mitochondrion inner membrane. It carries out the reaction L-glutamate(in) + H(+)(in) = L-glutamate(out) + H(+)(out). Functionally, responsible for the transport of glutamate from the cytosol into the mitochondrial matrix with the concomitant import of a proton (symport system). This is Mitochondrial glutamate carrier 2 from Homo sapiens (Human).